Consider the following 84-residue polypeptide: Small ribosomal subunit protein bS20 (84 aa).

It belongs to the bacterial ribosomal protein bS20 family.

Functionally, binds directly to 16S ribosomal RNA. This is Small ribosomal subunit protein bS20 from Levilactobacillus brevis (strain ATCC 367 / BCRC 12310 / CIP 105137 / JCM 1170 / LMG 11437 / NCIMB 947 / NCTC 947) (Lactobacillus brevis).